Consider the following 169-residue polypeptide: Peptide methionine sulfoxide reductase MsrA (169 aa).

Cys10 is an active-site residue.

It belongs to the MsrA Met sulfoxide reductase family.

It carries out the reaction L-methionyl-[protein] + [thioredoxin]-disulfide + H2O = L-methionyl-(S)-S-oxide-[protein] + [thioredoxin]-dithiol. The catalysed reaction is [thioredoxin]-disulfide + L-methionine + H2O = L-methionine (S)-S-oxide + [thioredoxin]-dithiol. Functionally, has an important function as a repair enzyme for proteins that have been inactivated by oxidation. Catalyzes the reversible oxidation-reduction of methionine sulfoxide in proteins to methionine. In Streptococcus equi subsp. zooepidemicus (strain MGCS10565), this protein is Peptide methionine sulfoxide reductase MsrA.